We begin with the raw amino-acid sequence, 140 residues long: Nucleoside diphosphate kinase (140 aa).

ATP contacts are provided by K11, F59, R87, T93, R104, and N114. Catalysis depends on H117, which acts as the Pros-phosphohistidine intermediate.

It belongs to the NDK family. Homotetramer. Mg(2+) is required as a cofactor.

Its subcellular location is the cytoplasm. It catalyses the reaction a 2'-deoxyribonucleoside 5'-diphosphate + ATP = a 2'-deoxyribonucleoside 5'-triphosphate + ADP. It carries out the reaction a ribonucleoside 5'-diphosphate + ATP = a ribonucleoside 5'-triphosphate + ADP. Major role in the synthesis of nucleoside triphosphates other than ATP. The ATP gamma phosphate is transferred to the NDP beta phosphate via a ping-pong mechanism, using a phosphorylated active-site intermediate. The polypeptide is Nucleoside diphosphate kinase (Nitrobacter hamburgensis (strain DSM 10229 / NCIMB 13809 / X14)).